The sequence spans 432 residues: 3-phosphoshikimate 1-carboxyvinyltransferase (432 aa).

The 3-phosphoshikimate site is built by Lys23, Ser24, and Arg28. Lys23 contacts phosphoenolpyruvate. Phosphoenolpyruvate is bound by residues Gly95 and Arg123. Residues Ser167, Gln169, Asp317, and Lys344 each contribute to the 3-phosphoshikimate site. Gln169 is a phosphoenolpyruvate binding site. Asp317 serves as the catalytic Proton acceptor. Residues Arg348 and Arg390 each coordinate phosphoenolpyruvate.

This sequence belongs to the EPSP synthase family. In terms of assembly, monomer.

The protein localises to the cytoplasm. The enzyme catalyses 3-phosphoshikimate + phosphoenolpyruvate = 5-O-(1-carboxyvinyl)-3-phosphoshikimate + phosphate. The protein operates within metabolic intermediate biosynthesis; chorismate biosynthesis; chorismate from D-erythrose 4-phosphate and phosphoenolpyruvate: step 6/7. In terms of biological role, catalyzes the transfer of the enolpyruvyl moiety of phosphoenolpyruvate (PEP) to the 5-hydroxyl of shikimate-3-phosphate (S3P) to produce enolpyruvyl shikimate-3-phosphate and inorganic phosphate. The protein is 3-phosphoshikimate 1-carboxyvinyltransferase of Staphylococcus aureus (strain bovine RF122 / ET3-1).